The following is a 281-amino-acid chain: NADPH-dependent 7-cyano-7-deazaguanine reductase (281 aa).

Residue valine 81–serine 83 participates in substrate binding. An NADPH-binding site is contributed by serine 83 to lysine 84. Catalysis depends on cysteine 188, which acts as the Thioimide intermediate. Aspartate 195 acts as the Proton donor in catalysis. Substrate is bound at residue histidine 227 to glutamate 228. An NADPH-binding site is contributed by arginine 256 to glycine 257. The tract at residues isoleucine 261 to glutamine 281 is disordered.

It belongs to the GTP cyclohydrolase I family. QueF type 2 subfamily. Homodimer.

It is found in the cytoplasm. It carries out the reaction 7-aminomethyl-7-carbaguanine + 2 NADP(+) = 7-cyano-7-deazaguanine + 2 NADPH + 3 H(+). The protein operates within tRNA modification; tRNA-queuosine biosynthesis. In terms of biological role, catalyzes the NADPH-dependent reduction of 7-cyano-7-deazaguanine (preQ0) to 7-aminomethyl-7-deazaguanine (preQ1). This is NADPH-dependent 7-cyano-7-deazaguanine reductase from Verminephrobacter eiseniae (strain EF01-2).